A 293-amino-acid polypeptide reads, in one-letter code: Movement protein BC1 (293 aa).

Belongs to the begomovirus movement protein BC1 family. Binds to dimeric supercoiled plasmid DNA. In terms of processing, phosphorylated.

The protein localises to the host cell membrane. Its subcellular location is the host microsome membrane. The protein resides in the host endoplasmic reticulum membrane. In terms of biological role, transports viral genome to neighboring plant cells directly through plasmosdesmata, without any budding. The movement protein allows efficient cell to cell propagation, by bypassing the host cell wall barrier. Begomovirus genome is shuttled out of nucleus by Nuclear shuttle protein (NSP) and the movement protein transports the DNA-NSP complex to cell plasmodesmata and facilitates further movement across the cell wall. The polypeptide is Movement protein BC1 (Macroptilium lathyroides (Lima bean)).